Here is a 394-residue protein sequence, read N- to C-terminus: Penicillopepsin-3 (394 aa).

The first 20 residues, 1–20 (MVSFTQLQLAFLGLSALGAA), serve as a signal peptide directing secretion. The propeptide at 21-70 (VPVTGTSEKKTFSLNQVKVAGTKTKNPAEHYANALRKYGAEVPSHVLAAA) is activation peptide. The Peptidase A1 domain occupies 87–392 (YLTPIDVGGT…DASGPRLGFA (306 aa)). Active-site residues include aspartate 103 and aspartate 284. A disulfide bridge connects residues cysteine 320 and cysteine 355.

It belongs to the peptidase A1 family. In terms of assembly, monomer.

The protein localises to the secreted. It carries out the reaction Hydrolysis of proteins with broad specificity similar to that of pepsin A, preferring hydrophobic residues at P1 and P1', but also cleaving 20-Gly-|-Glu-21 in the B chain of insulin. Clots milk, and activates trypsinogen.. Functionally, secreted aspartic endopeptidase that allows assimilation of proteinaceous substrates. The scissile peptide bond is attacked by a nucleophilic water molecule activated by two aspartic residues in the active site. Shows a broad primary substrate specificity. Favors hydrophobic residues at the P1 and P1' positions, but can also activate trypsinogen and hydrolyze the B chain of insulin between positions 'Gly-20' and 'Glu-21'. In Penicillium janthinellum (Penicillium vitale), this protein is Penicillopepsin-3.